A 176-amino-acid chain; its full sequence is Lactoylglutathione lyase (176 aa).

Residues 23-167 (VFNHTMLRVK…DGYWVEIVQA (145 aa)) enclose the VOC domain. Histidine 26 contacts Ni(2+). Arginine 30 contacts substrate. Glutamate 92 lines the Ni(2+) pocket. 3 residues coordinate substrate: asparagine 96, arginine 114, and histidine 118. Residues histidine 118 and glutamate 163 each contribute to the Ni(2+) site. Glutamate 163 acts as the Proton donor/acceptor in catalysis.

Belongs to the glyoxalase I family. As to quaternary structure, monomer. Ni(2+) serves as cofactor. Requires Zn(2+) as cofactor.

The catalysed reaction is (R)-S-lactoylglutathione = methylglyoxal + glutathione. It participates in secondary metabolite metabolism; methylglyoxal degradation; (R)-lactate from methylglyoxal: step 1/2. Its function is as follows. Catalyzes the conversion of hemimercaptal, formed from methylglyoxal and glutathione, to S-lactoylglutathione. This chain is Lactoylglutathione lyase (gloA), found in Pseudomonas aeruginosa (strain ATCC 15692 / DSM 22644 / CIP 104116 / JCM 14847 / LMG 12228 / 1C / PRS 101 / PAO1).